The following is a 357-amino-acid chain: F-box only protein 25 (357 aa).

Residues 1–83 (MPFLGQDWRS…DTAAHSFYRE (83 aa)) form an interaction with beta-actin region. In terms of domain architecture, F-box spans 224 to 271 (GLTLSDLPLHMLNNILYRFSDGWDIVTLGQVTPTLYMLSEDRRLWKRL).

As to quaternary structure, part of a SCF (SKP1-cullin-F-box) protein ligase complex consisting of FBXO25, SKP1, CUL1 and RBX1. Interacts directly with SKP1 and CUL1. Interacts (via C-terminus) with actin (via N-terminus).

It is found in the nucleus. It functions in the pathway protein modification; protein ubiquitination. Substrate-recognition component of the SCF (SKP1-CUL1-F-box protein)-type E3 ubiquitin ligase complex. May play a role in accumulation of expanded polyglutamine (polyQ) protein huntingtin (HTT). The chain is F-box only protein 25 (Fbxo25) from Rattus norvegicus (Rat).